The sequence spans 260 residues: UPF0294 protein YPO1077/y3099/YP_2772 (260 aa).

The protein belongs to the UPF0294 family.

The protein resides in the cytoplasm. The sequence is that of UPF0294 protein YPO1077/y3099/YP_2772 from Yersinia pestis.